Reading from the N-terminus, the 178-residue chain is uncharacterized protein (178 aa).

An N-terminal signal peptide occupies residues 1-19 (MINRKILLTSLLLIFTVLS). Catalysis depends on residues Arg52, Glu60, and Arg94.

The protein belongs to the thermonuclease family.

This is an uncharacterized protein from Haemophilus influenzae (strain ATCC 51907 / DSM 11121 / KW20 / Rd).